Here is a 422-residue protein sequence, read N- to C-terminus: UPF0761 membrane protein XAC0937 (422 aa).

The next 6 helical transmembrane spans lie at 45–65 (VFALVPLAIVVFGVLSAFPAF), 102–122 (FTVAGMVALVASLLITLHSIE), 151–171 (GTMLAAASMAMAAYVFALPLF), 179–199 (LAEFAWRLAPMAVEFVCIVLI), 213–233 (ALPGALLAVILMEIVKWGFGF), and 247–267 (ALSALPILLLWIYLSWVSVLL).

It belongs to the UPF0761 family.

The protein resides in the cell inner membrane. This is UPF0761 membrane protein XAC0937 from Xanthomonas axonopodis pv. citri (strain 306).